Here is a 224-residue protein sequence, read N- to C-terminus: Ribonuclease HII (224 aa).

The 210-residue stretch at 1 to 210 folds into the RNase H type-2 domain; sequence MKVAGADEAG…AKKIEEKFKR (210 aa). A divalent metal cation contacts are provided by Asp-7, Glu-8, and Asp-105.

This sequence belongs to the RNase HII family. Requires Mn(2+) as cofactor. The cofactor is Mg(2+).

The protein localises to the cytoplasm. It catalyses the reaction Endonucleolytic cleavage to 5'-phosphomonoester.. Its function is as follows. Endonuclease that specifically degrades the RNA of RNA-DNA hybrids. The polypeptide is Ribonuclease HII (rnhB) (Pyrococcus abyssi (strain GE5 / Orsay)).